A 249-amino-acid polypeptide reads, in one-letter code: Low affinity immunoglobulin gamma Fc region receptor III-A (249 aa).

Residues 1–20 form the signal peptide; sequence MWQLLLPTALVLTAFSGIQA. The Extracellular segment spans residues 21 to 203; that stretch reads GLQKAVVNLD…SPSMFPPWHQ (183 aa). Ig-like C2-type domains are found at residues 22–102 and 119–188; these read LQKA…VQLE and EGDP…FRIS. 2 disulfides stabilise this stretch: C46–C88 and C127–C171. N62, N164, and N179 each carry an N-linked (GlcNAc...) asparagine glycan. The chain crosses the membrane as a helical span at residues 204 to 224; sequence ITFCLLIGLLFAIDTVLYFSV. The Cytoplasmic segment spans residues 225–249; sequence RRGLQSPVADYEEPKIQWSKEPQDK. Phosphotyrosine is present on Y235.

As to quaternary structure, forms a heterooligomeric complex with ITAM-containing signaling subunits FCER1G. Interacts (via transmembrane domain) with signaling subunits; this interaction is a prerequisite for receptor complex expression on the cell surface and intracellular signal transduction. Binds the Fc region of antigen-complexed IgG. Post-translationally, N-glycosylated. In terms of processing, phosphorylated following receptor ligation. Detected on myeloid cells, peripheral blood monocytes, splenic and bone marrow dendritic cells, and thioglycollate-elicited macrophages and neutrophils but absent from lymphoid populations with no expression observed on T cells, B cells, NK cells or other granulocytes (at protein level). Expressed in peripheral blood leukocytes, spleen, liver, thymus and small intestine. Expressed in splenic dendritic cell subsets (at protein level).

The protein resides in the cell membrane. Receptor for the invariable Fc fragment of immunoglobulin gamma (IgG). Binds with intermediate affinity to both IgG2a and IgG2b. Can bind to IgG2a and IgG2b monomers. Does not display binding to IgG1 or IgG3. Recognizes neutralizing virus-specific IgGs displayed on the cell surface of infected cells and triggers antibody-dependent cellular cytotoxicity (ADCC). Confers protection to lethal influenza virus infection. On splenic dendritic cells, uptakes antigen immune complexes and efficiently divert them into MHC class I and II antigen presentation pathways to provide for superior priming of CD4-positive and CD8-positive T cell immune responses. Mediates neutrophil activation by IgG complexes redundantly with FCGR2A. Plays a role in promoting bone resorption by enhancing osteoclast differentiation following binding to IgG2a. Also acts as a receptor for the Fc region of immunoglobulin epsilon (IgE). Binds with low affinity to both the a and b allotypes of IgE. Has also been shown to bind to IgE allotype a only but not to allotype b. Binds aggregated IgE but not the monomeric form and bound monomeric IgG is readily displaced by IgE complexes. Binding to IgE promotes macrophage-mediated phagocytosis, antigen presentation to T cells, production of pro-inflammatory cytokines and the late phase of cutaneous allergic reactions. Mediates enhanced ADCC in response to afucosylated IgGs. The polypeptide is Low affinity immunoglobulin gamma Fc region receptor III-A (Mus musculus (Mouse)).